The chain runs to 371 residues: Peptide chain release factor 2 (371 aa).

An N5-methylglutamine modification is found at Gln-252.

Belongs to the prokaryotic/mitochondrial release factor family. Methylated by PrmC. Methylation increases the termination efficiency of RF2.

It is found in the cytoplasm. Its function is as follows. Peptide chain release factor 2 directs the termination of translation in response to the peptide chain termination codons UGA and UAA. This chain is Peptide chain release factor 2, found in Staphylococcus epidermidis (strain ATCC 35984 / DSM 28319 / BCRC 17069 / CCUG 31568 / BM 3577 / RP62A).